Here is a 55-residue protein sequence, read N- to C-terminus: Mannose/glucose-specific lectin alpha chain (55 aa).

This sequence belongs to the leguminous lectin family. As to quaternary structure, tetramer of two alpha and two beta chains.

This chain is Mannose/glucose-specific lectin alpha chain, found in Lathyrus sativus (White vetchling).